A 241-amino-acid polypeptide reads, in one-letter code: Protein-L-isoaspartate O-methyltransferase (241 aa).

Serine 69 is an active-site residue.

The protein belongs to the methyltransferase superfamily. L-isoaspartyl/D-aspartyl protein methyltransferase family.

It localises to the cytoplasm. It catalyses the reaction [protein]-L-isoaspartate + S-adenosyl-L-methionine = [protein]-L-isoaspartate alpha-methyl ester + S-adenosyl-L-homocysteine. Functionally, catalyzes the methyl esterification of L-isoaspartyl residues in peptides and proteins that result from spontaneous decomposition of normal L-aspartyl and L-asparaginyl residues. It plays a role in the repair and/or degradation of damaged proteins. This is Protein-L-isoaspartate O-methyltransferase from Hyperthermus butylicus (strain DSM 5456 / JCM 9403 / PLM1-5).